The primary structure comprises 361 residues: UPF0283 membrane protein Smed_1530 (361 aa).

Residues 1 to 40 form a disordered region; it reads MNDDSNGRRRRPAAFPVGTEDATSRELEQTPRRAPGSFSD. Residues 22–31 are compositionally biased toward basic and acidic residues; the sequence is ATSRELEQTP. Helical transmembrane passes span 76–96 and 109–129; these read FGKI…GLWV and WLGY…LIVV.

This sequence belongs to the UPF0283 family.

It is found in the cell inner membrane. In Sinorhizobium medicae (strain WSM419) (Ensifer medicae), this protein is UPF0283 membrane protein Smed_1530.